We begin with the raw amino-acid sequence, 64 residues long: Large ribosomal subunit protein bL35 (64 aa).

A compositionally biased stretch (basic residues) spans 1-14 (MKNKTHKGTAKRVK). Positions 1-29 (MKNKTHKGTAKRVKVTGSGKLVREQANRR) are disordered.

The protein belongs to the bacterial ribosomal protein bL35 family.

The chain is Large ribosomal subunit protein bL35 from Corynebacterium glutamicum (strain R).